A 187-amino-acid chain; its full sequence is UPF0167 protein MT2352 (187 aa).

The protein belongs to the UPF0167 family.

This Mycobacterium tuberculosis (strain CDC 1551 / Oshkosh) protein is UPF0167 protein MT2352.